The following is a 289-amino-acid chain: uncharacterized protein (289 aa).

A compositionally biased stretch (basic and acidic residues) spans 1 to 20 (MNPMDRQTEGQEPQHQDRQP). The disordered stretch occupies residues 1–39 (MNPMDRQTEGQEPQHQDRQPGIESKMNPLPLSEDEDYRG). NADP(+) is bound at residue 49 to 73 (IITGGDSGIGRAAAIAFAKEGADIS). Ser-181 is a binding site for substrate. Tyr-194 functions as the Proton acceptor in the catalytic mechanism.

This sequence belongs to the short-chain dehydrogenases/reductases (SDR) family.

This is an uncharacterized protein from Bacillus subtilis (strain 168).